Here is a 1499-residue protein sequence, read N- to C-terminus: DNA-directed RNA polymerase subunit beta' (1499 aa).

Zn(2+)-binding residues include Cys-67, Cys-69, Cys-82, and Cys-85. Mg(2+)-binding residues include Asp-499, Asp-501, and Asp-503. 4 residues coordinate Zn(2+): Cys-867, Cys-943, Cys-950, and Cys-953.

Belongs to the RNA polymerase beta' chain family. In terms of assembly, the RNAP catalytic core consists of 2 alpha, 1 beta, 1 beta' and 1 omega subunit. When a sigma factor is associated with the core the holoenzyme is formed, which can initiate transcription. Mg(2+) is required as a cofactor. Requires Zn(2+) as cofactor.

The catalysed reaction is RNA(n) + a ribonucleoside 5'-triphosphate = RNA(n+1) + diphosphate. In terms of biological role, DNA-dependent RNA polymerase catalyzes the transcription of DNA into RNA using the four ribonucleoside triphosphates as substrates. The protein is DNA-directed RNA polymerase subunit beta' of Prosthecochloris aestuarii (strain DSM 271 / SK 413).